Consider the following 217-residue polypeptide: Probable disulfide bond formation protein D (217 aa).

Residues methionine 1–serine 28 form the signal peptide. A disulfide bridge links cysteine 66 with cysteine 69.

It belongs to the thioredoxin family. DsbA subfamily.

Functionally, may be required for disulfide bond formation in some proteins. This Bacillus anthracis protein is Probable disulfide bond formation protein D (bdbD).